A 226-amino-acid polypeptide reads, in one-letter code: uncharacterized protein (226 aa).

In terms of domain architecture, HTH arsR-type spans 1–92; the sequence is MNPNIAKISS…QLLHIAPKAK (92 aa). The segment at residues 32-55 is a DNA-binding region (H-T-H motif); sequence AGELAYLANIKPQTASFHLNKLLE.

This is an uncharacterized protein from Bacillus subtilis (strain 168).